The following is a 506-amino-acid chain: Probable Xaa-Pro aminopeptidase BDBG_08406 (506 aa).

The Mn(2+) site is built by aspartate 285, aspartate 296, glutamate 433, and glutamate 471.

Belongs to the peptidase M24B family. Mn(2+) is required as a cofactor.

The catalysed reaction is Release of any N-terminal amino acid, including proline, that is linked to proline, even from a dipeptide or tripeptide.. Functionally, catalyzes the removal of a penultimate prolyl residue from the N-termini of peptides. This is Probable Xaa-Pro aminopeptidase BDBG_08406 from Blastomyces gilchristii (strain SLH14081) (Blastomyces dermatitidis).